The primary structure comprises 430 residues: Histidinol dehydrogenase (430 aa).

Y124, Q185, and N208 together coordinate NAD(+). Residues S233, Q255, and H258 each coordinate substrate. Q255 and H258 together coordinate Zn(2+). Active-site proton acceptor residues include E324 and H325. Positions 325, 358, 412, and 418 each coordinate substrate. A Zn(2+)-binding site is contributed by D358. H418 serves as a coordination point for Zn(2+).

It belongs to the histidinol dehydrogenase family. Requires Zn(2+) as cofactor.

The enzyme catalyses L-histidinol + 2 NAD(+) + H2O = L-histidine + 2 NADH + 3 H(+). The protein operates within amino-acid biosynthesis; L-histidine biosynthesis; L-histidine from 5-phospho-alpha-D-ribose 1-diphosphate: step 9/9. Catalyzes the sequential NAD-dependent oxidations of L-histidinol to L-histidinaldehyde and then to L-histidine. This Leptospira biflexa serovar Patoc (strain Patoc 1 / Ames) protein is Histidinol dehydrogenase.